A 723-amino-acid chain; its full sequence is Probable C-mannosyltransferase DPY19L4 (723 aa).

Positions 1 to 33 (MAEEEGPPVELRQRKKPKSSENKESAKEEKISD) are disordered. Alanine 2 carries the N-acetylalanine modification. The span at 18 to 32 (KSSENKESAKEEKIS) shows a compositional bias: basic and acidic residues. The next 12 helical transmembrane spans lie at 52-72 (IFIG…YLSA), 161-178 (VYFY…YVTA), 184-202 (WLMS…WFVI), 222-240 (LPYF…KSNL), 260-280 (MMMW…LFLL), 292-310 (YEVY…LLQF), 316-337 (LVSP…QLNV), 349-370 (VINF…KMFV), 421-441 (LLPF…QVIF), 466-486 (IIYH…IEGL), 489-509 (IWIP…ELWM), and 522-542 (PILL…LSLW).

It belongs to the dpy-19 family. Widely expressed.

The protein resides in the membrane. Functionally, probable C-mannosyltransferase that mediates C-mannosylation of tryptophan residues on target proteins. In Homo sapiens (Human), this protein is Probable C-mannosyltransferase DPY19L4 (DPY19L4).